The chain runs to 437 residues: Sonic hedgehog protein (437 aa).

The signal sequence occupies residues 1–24 (MLLLLARCFLVILASSLLVCPGLA). Cys-25 is lipidated: N-palmitoyl cysteine. The Cardin-Weintraub motif lies at 33 to 39 (KRRHPKK). Ca(2+)-binding residues include Glu-90, Glu-91, Asp-96, Thr-126, Glu-127, Asp-130, and Asp-132. Zn(2+) is bound by residues His-141, Asp-148, and His-183. Gly-198 is lipidated: Cholesterol glycine ester. An N-linked (GlcNAc...) asparagine glycan is attached at Asn-279.

This sequence belongs to the hedgehog family. In terms of assembly, interacts with HHATL/GUP1 which negatively regulates HHAT-mediated palmitoylation of the SHH N-terminus. Interacts with BOC and CDON. Interacts with HHIP. Interacts with DISP1 via its cholesterol anchor. Interacts with SCUBE2. Interacts with glypican GPC3. Multimer. In terms of processing, the C-terminal domain displays an autoproteolysis activity and a cholesterol transferase activity. Both activities result in the cleavage of the full-length protein and covalent attachment of a cholesterol moiety to the C-terminal of the newly generated N-terminal fragment (ShhN). Cholesterylation is required for the sonic hedgehog protein N-product targeting to lipid rafts and multimerization. ShhN is the active species in both local and long-range signaling, whereas the C-product (ShhC) is degraded in the endoplasmic reticulum. Post-translationally, N-palmitoylation by HHAT of ShhN is required for sonic hedgehog protein N-product multimerization and full activity. It is a prerequisite for the membrane-proximal positioning and the subsequent shedding of this N-terminal peptide. The lipidated N- and C-terminal peptides of ShhNp can be cleaved (shedding). The N-terminal palmitoylated peptide is cleaved at the Cardin-Weintraub (CW) motif site. The cleavage reduced the interactions with heparan sulfate. The cleavage is enhanced by SCUBE2. As to expression, expressed in a number of embryonic tissues including the notochord, ventral neural tube, floor plate, lung bud, zone of polarizing activity and posterior distal mesenchyme of limbs. In the adult, expressed in lung and neural retina.

It localises to the endoplasmic reticulum membrane. The protein resides in the golgi apparatus membrane. It is found in the cell membrane. It carries out the reaction glycyl-L-cysteinyl-[protein] + cholesterol + H(+) = [protein]-C-terminal glycyl cholesterol ester + N-terminal L-cysteinyl-[protein]. In terms of biological role, the C-terminal part of the sonic hedgehog protein precursor displays an autoproteolysis and a cholesterol transferase activity. Both activities result in the cleavage of the full-length protein into two parts (ShhN and ShhC) followed by the covalent attachment of a cholesterol moiety to the C-terminal of the newly generated ShhN. Both activities occur in the reticulum endoplasmic. Once cleaved, ShhC is degraded in the endoplasmic reticulum. Its function is as follows. The dually lipidated sonic hedgehog protein N-product (ShhNp) is a morphogen which is essential for a variety of patterning events during development. Induces ventral cell fate in the neural tube and somites. Involved in the patterning of the anterior-posterior axis of the developing limb bud. Essential for axon guidance. Binds to the patched (PTCH1) receptor, which functions in association with smoothened (SMO), to activate the transcription of target genes. In the absence of SHH, PTCH1 represses the constitutive signaling activity of SMO. The protein is Sonic hedgehog protein of Mus musculus (Mouse).